Reading from the N-terminus, the 239-residue chain is uncharacterized protein (239 aa).

The S4 RNA-binding domain occupies 1–65 (MRLDKLLANS…DYREFIYLMM (65 aa)). Asp103 serves as the catalytic Nucleophile.

Belongs to the pseudouridine synthase RsuA family.

The catalysed reaction is a uridine in RNA = a pseudouridine in RNA. This is an uncharacterized protein from Bacillus subtilis (strain 168).